The sequence spans 453 residues: Regulatory protein opaque-2 (453 aa).

The interval 145–243 (SSVVTSDQRS…SNRESARRSR (99 aa)) is disordered. Polar residues predominate over residues 146–175 (SVVTSDQRSQGSNNHTGGSSIRNNPVQNKL). Acidic residues predominate over residues 207 to 216 (PSDEDMDGEV). Residues 224 to 240 (PTEERVRKKESNRESAR) show a composition bias toward basic and acidic residues. Positions 225–288 (TEERVRKKES…NDANVDNRVL (64 aa)) constitute a bZIP domain. Residues 228–251 (RVRKKESNRESARRSRYRKAAHLK) are basic motif. The interval 253 to 274 (LEDQVAQLKAENSCLLRRIAAL) is leucine-zipper.

It belongs to the bZIP family. As to quaternary structure, interacts with the Dof zinc finger protein PBF. As to expression, seed endosperm.

Its subcellular location is the nucleus. Functionally, involved in the regulation of the endosperm-specific production of albumin b-32 and other zein proteins. It is a trans-acting transcriptional activator that binds to the consensus sequence 5'-GATGAYRTGR-3'. This chain is Regulatory protein opaque-2 (O2), found in Zea mays (Maize).